We begin with the raw amino-acid sequence, 368 residues long: Endoglucanase (368 aa).

The first 21 residues, 1–21 (MNVLRSGLVTMLLLAAFSVQA), serve as a signal peptide directing secretion. Glu55 serves as the catalytic Proton donor. The active-site Nucleophile is the Asp116.

Belongs to the glycosyl hydrolase 8 (cellulase D) family.

The protein localises to the secreted. The enzyme catalyses Endohydrolysis of (1-&gt;4)-beta-D-glucosidic linkages in cellulose, lichenin and cereal beta-D-glucans.. It functions in the pathway glycan metabolism; bacterial cellulose biosynthesis. In terms of biological role, hydrolyzes carboxymethylcellulose. In Escherichia coli O157:H7, this protein is Endoglucanase (bcsZ).